The following is a 252-amino-acid chain: MSGHNKWANIKHRKAAQDAKKSKIFTKLIREIIVAAKEGGGDPETNPRLRAVLERARAANMPKDTIEKSIKKGTGELEGVDYQEIIYEAYAPAGVALYIYAMTDNKNRTAQELRHLLSKHGGSLAESGSVAWLFERKGIIEIPKEKIADFEEFAMVAIDAGAEDIIEDDPIQVITAPDMLTEVKDKLAENGFEGEAKVTFIPKNTVKVTGADAEKVLKLVSVLEDNDDVQEVYANFEIDDKELEEIMSKLEG.

It belongs to the TACO1 family.

Its subcellular location is the cytoplasm. The chain is Probable transcriptional regulatory protein THA_1246 from Thermosipho africanus (strain TCF52B).